A 592-amino-acid polypeptide reads, in one-letter code: Sodium- and chloride-dependent transporter XTRP3A (592 aa).

The Cytoplasmic segment spans residues 1-7 (MEKARPQ). A helical membrane pass occupies residues 8 to 28 (WGHPLQFVFACISYAVGLGNV). Residues 29–42 (WRFPYLCQMYGGGS) are Extracellular-facing. Residues 43 to 63 (FLVPYIIMLIVEGMPLLYLEL) form a helical membrane-spanning segment. Over 64–79 (AVGQRMRQGSIGAWRT) the chain is Cytoplasmic. The chain crosses the membrane as a helical span at residues 80–100 (ISPYLSGVGVASVVVSFFLSM). Topologically, residues 101–165 (YYNVINAWGF…ISPSIQENGG (65 aa)) are extracellular. Residue Asn131 is glycosylated (N-linked (GlcNAc...) asparagine). The chain crosses the membrane as a helical span at residues 166–186 (VQWEPALCLTLAWLMVYLCIL). Over 187 to 194 (RGTESTGK) the chain is Cytoplasmic. The helical transmembrane segment at 195 to 215 (VVYFTASMPYCVLIIYLVRGL) threads the bilayer. Residues 216-241 (TLHGATNGLMYMFTPKMEQLANPKAW) are Extracellular-facing. Residues 242–262 (INAATQIFFSLGLGFGSLIAF) traverse the membrane as a helical segment. Over 263-276 (ASYNEPSNNCQKHA) the chain is Cytoplasmic. The helical transmembrane segment at 277 to 297 (IIVSIINSSTSIFASIVTFSI) threads the bilayer. Topologically, residues 298-389 (YGFKATFNYE…EAIKNMEVSQ (92 aa)) are extracellular. Residues 390 to 410 (LWSVLYFFMLLMLGIGSMLGN) traverse the membrane as a helical segment. At 411–431 (TAAILTPLTDSKVISSYLPKE) the chain is on the cytoplasmic side. The helical transmembrane segment at 432 to 452 (AISGLVCLINCAVGMVFTMEA) threads the bilayer. Topologically, residues 453–465 (GNYWFDIFNDYAA) are extracellular. A helical membrane pass occupies residues 466–486 (TLSLLLIVLVETIAVCYVYGL). Residues 487–504 (KRFESDLRAMTGRTLSWY) lie on the Cytoplasmic side of the membrane. A helical transmembrane segment spans residues 505-525 (WKVMWAFVSPLLIVGLFIFYL). Residues 526–554 (SDYILTGTLQYQAWDATQGQLVTKDYPPH) lie on the Extracellular side of the membrane. The chain crosses the membrane as a helical span at residues 555–575 (ALAVIGLLVASSTMCIPLVAL). Over 576 to 592 (GTFIRNRLKRGGSAPVA) the chain is Cytoplasmic.

The protein belongs to the sodium:neurotransmitter symporter (SNF) (TC 2.A.22) family. SLC6A20 subfamily. As to expression, expressed in brain, kidney, small intestine, thymus, spleen and lung. In the brain, expressed in cerebellum, cortex and brain stem. Not detected in liver, muscle or heart. In brain, widespread in various regions, including the meninges, choroid plexus, cortex, hippocampus and thalamus.

It is found in the apical cell membrane. It catalyses the reaction L-proline(out) + chloride(out) + 2 Na(+)(out) = L-proline(in) + chloride(in) + 2 Na(+)(in). The catalysed reaction is 4-hydroxy-L-proline(out) + chloride(out) + 2 Na(+)(out) = 4-hydroxy-L-proline(in) + chloride(in) + 2 Na(+)(in). It carries out the reaction 2-methyl-2-(methylamino)propanoate(out) + chloride(out) + 2 Na(+)(out) = 2-methyl-2-(methylamino)propanoate(in) + chloride(in) + 2 Na(+)(in). The enzyme catalyses L-pipecolate(out) + chloride(out) + 2 Na(+)(out) = L-pipecolate(in) + chloride(in) + 2 Na(+)(in). It catalyses the reaction glycine betaine(out) + chloride(out) + 2 Na(+)(out) = glycine betaine(in) + chloride(in) + 2 Na(+)(in). The catalysed reaction is glycine(out) + chloride(out) + 2 Na(+)(out) = glycine(in) + chloride(in) + 2 Na(+)(in). In terms of biological role, mediates the Na(+)- and Cl(-)-dependent uptake of imino acids such as L-proline, N-methyl-L-proline and pipecolate as well as N-methylated amino acids. Also transports glycine, regulates proline and glycine homeostasis in the brain playing a role in the modulation of NMDAR currents. This chain is Sodium- and chloride-dependent transporter XTRP3A, found in Mus musculus (Mouse).